Here is a 65-residue protein sequence, read N- to C-terminus: Trypsin inhibitor (65 aa).

Homotrimer.

The sequence is that of Trypsin inhibitor from Zea mays (Maize).